Here is a 281-residue protein sequence, read N- to C-terminus: Sulfur carrier protein FdhD (281 aa).

The Cysteine persulfide intermediate role is filled by cysteine 117.

Belongs to the FdhD family.

The protein resides in the cytoplasm. Required for formate dehydrogenase (FDH) activity. Acts as a sulfur carrier protein that transfers sulfur from IscS to the molybdenum cofactor prior to its insertion into FDH. This chain is Sulfur carrier protein FdhD, found in Xanthomonas campestris pv. campestris (strain 8004).